The primary structure comprises 318 residues: Probable serine/threonine-protein kinase MRK1 homolog (318 aa).

Positions 40 to 313 (YRYVEMIGRG…ASELLRKQFF (274 aa)) constitute a Protein kinase domain. ATP contacts are provided by residues 46–54 (IGRGSFGVV) and K68. The active-site Proton acceptor is the D159.

This sequence belongs to the protein kinase superfamily. CMGC Ser/Thr protein kinase family. GSK-3 subfamily.

It is found in the cytoplasm. The protein resides in the nucleus. The enzyme catalyses L-seryl-[protein] + ATP = O-phospho-L-seryl-[protein] + ADP + H(+). It carries out the reaction L-threonyl-[protein] + ATP = O-phospho-L-threonyl-[protein] + ADP + H(+). May play a role in the initiation and completion of mitosis. The chain is Probable serine/threonine-protein kinase MRK1 homolog (MRK1) from Encephalitozoon cuniculi (strain GB-M1) (Microsporidian parasite).